The chain runs to 126 residues: Small ribosomal subunit protein uS13 (126 aa).

The segment at 95-126 is disordered; sequence GLPVRGQRTQTNARTRKGKKKTVAGKKKAGRK. Positions 108–126 are enriched in basic residues; that stretch reads RTRKGKKKTVAGKKKAGRK.

This sequence belongs to the universal ribosomal protein uS13 family. Part of the 30S ribosomal subunit. Forms a loose heterodimer with protein S19. Forms two bridges to the 50S subunit in the 70S ribosome.

Its function is as follows. Located at the top of the head of the 30S subunit, it contacts several helices of the 16S rRNA. In the 70S ribosome it contacts the 23S rRNA (bridge B1a) and protein L5 of the 50S subunit (bridge B1b), connecting the 2 subunits; these bridges are implicated in subunit movement. Contacts the tRNAs in the A and P-sites. The chain is Small ribosomal subunit protein uS13 from Thermobifida fusca (strain YX).